The sequence spans 194 residues: Mu-like prophage FluMu protein gp37 (194 aa).

The protein to phage Mu protein gp37.

This chain is Mu-like prophage FluMu protein gp37, found in Haemophilus influenzae (strain ATCC 51907 / DSM 11121 / KW20 / Rd).